A 528-amino-acid polypeptide reads, in one-letter code: 4-nitrophenol 4-monooxygenase/4-nitrocatechol 2-monooxygenase, oxygenase component (528 aa).

100–104 (RPPAG) contributes to the substrate binding site. FAD is bound by residues 153–155 (PMF), 159–162 (QFDR), and Thr194. 205 to 206 (GN) contributes to the substrate binding site. 461–464 (TMQR) lines the FAD pocket.

The protein belongs to the FADH(2)-utilizing monooxygenase family. As to quaternary structure, the 4-NP/4-NCA monooxygenase is composed of an oxygenase component NpcA and a reductase component NpcB. It depends on FAD as a cofactor.

The enzyme catalyses 4-nitrophenol + NADH + O2 + H(+) = 4-nitrocatechol + NAD(+) + H2O. It carries out the reaction 4-nitrocatechol + NADPH + O2 = 2-hydroxy-1,4-benzoquinone + nitrite + NADP(+) + H2O. It catalyses the reaction 4-nitrocatechol + NADH + O2 = 2-hydroxy-1,4-benzoquinone + nitrite + NAD(+) + H2O. Its pathway is aromatic compound metabolism. The protein operates within xenobiotic degradation. With respect to regulation, inhibited by methimazole. In terms of biological role, involved in the degradation of para-nitrophenol (4-NP). Catalyzes both the initial hydroxylation of 4-NP to produce 4-nitrocatechol (4-NCA) and the subsequent oxidative release of the nitro group from 4-NCA to produce 2-hydroxy-1,4-benzoquinone. It can also use 4-nitroresorcinol as substrate with a rate of nitrite release similar to that observed with the two physiological substrates, 4-PN and 4-NCA. This is 4-nitrophenol 4-monooxygenase/4-nitrocatechol 2-monooxygenase, oxygenase component (npcA) from Rhodococcus opacus (Nocardia opaca).